The following is a 471-amino-acid chain: Ribulose bisphosphate carboxylase large chain (471 aa).

Substrate is bound by residues N119 and T169. The Proton acceptor role is filled by K171. Residue K173 participates in substrate binding. Positions 197, 199, and 200 each coordinate Mg(2+). K197 carries the N6-carboxylysine modification. The Proton acceptor role is filled by H290. Substrate-binding residues include R291, H323, and S375.

It belongs to the RuBisCO large chain family. Type I subfamily. Heterohexadecamer of 8 large chains and 8 small chains; disulfide-linked. The disulfide link is formed within the large subunit homodimers. It depends on Mg(2+) as a cofactor. Post-translationally, the disulfide bond which can form in the large chain dimeric partners within the hexadecamer appears to be associated with oxidative stress and protein turnover.

Its subcellular location is the carboxysome. It catalyses the reaction 2 (2R)-3-phosphoglycerate + 2 H(+) = D-ribulose 1,5-bisphosphate + CO2 + H2O. It carries out the reaction D-ribulose 1,5-bisphosphate + O2 = 2-phosphoglycolate + (2R)-3-phosphoglycerate + 2 H(+). Functionally, ruBisCO catalyzes two reactions: the carboxylation of D-ribulose 1,5-bisphosphate, the primary event in carbon dioxide fixation, as well as the oxidative fragmentation of the pentose substrate in the photorespiration process. Both reactions occur simultaneously and in competition at the same active site. This is Ribulose bisphosphate carboxylase large chain from Crocosphaera subtropica (strain ATCC 51142 / BH68) (Cyanothece sp. (strain ATCC 51142)).